The sequence spans 254 residues: 3-deoxy-manno-octulosonate cytidylyltransferase (254 aa).

Belongs to the KdsB family.

Its subcellular location is the cytoplasm. The catalysed reaction is 3-deoxy-alpha-D-manno-oct-2-ulosonate + CTP = CMP-3-deoxy-beta-D-manno-octulosonate + diphosphate. It functions in the pathway nucleotide-sugar biosynthesis; CMP-3-deoxy-D-manno-octulosonate biosynthesis; CMP-3-deoxy-D-manno-octulosonate from 3-deoxy-D-manno-octulosonate and CTP: step 1/1. The protein operates within bacterial outer membrane biogenesis; lipopolysaccharide biosynthesis. In terms of biological role, activates KDO (a required 8-carbon sugar) for incorporation into bacterial lipopolysaccharide in Gram-negative bacteria. This chain is 3-deoxy-manno-octulosonate cytidylyltransferase, found in Ectopseudomonas mendocina (strain ymp) (Pseudomonas mendocina).